The chain runs to 205 residues: Dephospho-CoA kinase (205 aa).

The DPCK domain maps to 4-204 (VVGLTGGIAS…QYYLTLATQQ (201 aa)). An ATP-binding site is contributed by 12-17 (ASGKTT).

It belongs to the CoaE family.

The protein localises to the cytoplasm. It catalyses the reaction 3'-dephospho-CoA + ATP = ADP + CoA + H(+). It participates in cofactor biosynthesis; coenzyme A biosynthesis; CoA from (R)-pantothenate: step 5/5. Catalyzes the phosphorylation of the 3'-hydroxyl group of dephosphocoenzyme A to form coenzyme A. The sequence is that of Dephospho-CoA kinase from Haemophilus ducreyi (strain 35000HP / ATCC 700724).